Reading from the N-terminus, the 94-residue chain is Sec-independent protein translocase protein TatA (94 aa).

Residues 1–21 (MFGRLGAPEIILILVVIILLF) form a helical membrane-spanning segment. The segment at 44-94 (AKAMKSEGQESTPAGPPNTDEQPPAQRTIQAAPGDVTSSRPVSEPTDTTKR) is disordered. A compositionally biased stretch (polar residues) spans 62-72 (TDEQPPAQRTI).

Belongs to the TatA/E family. As to quaternary structure, the Tat system comprises two distinct complexes: a TatABC complex, containing multiple copies of TatA, TatB and TatC subunits, and a separate TatA complex, containing only TatA subunits. Substrates initially bind to the TatABC complex, which probably triggers association of the separate TatA complex to form the active translocon.

Its subcellular location is the cell membrane. Functionally, part of the twin-arginine translocation (Tat) system that transports large folded proteins containing a characteristic twin-arginine motif in their signal peptide across membranes. TatA could form the protein-conducting channel of the Tat system. This Streptomyces avermitilis (strain ATCC 31267 / DSM 46492 / JCM 5070 / NBRC 14893 / NCIMB 12804 / NRRL 8165 / MA-4680) protein is Sec-independent protein translocase protein TatA.